A 526-amino-acid polypeptide reads, in one-letter code: Light-independent protochlorophyllide reductase subunit B (526 aa).

Residue Asp36 participates in [4Fe-4S] cluster binding. Asp290 functions as the Proton donor in the catalytic mechanism. 425 to 426 lines the substrate pocket; it reads GL.

The protein belongs to the ChlB/BchB/BchZ family. In terms of assembly, protochlorophyllide reductase is composed of three subunits; ChlL, ChlN and ChlB. Forms a heterotetramer of two ChlB and two ChlN subunits. [4Fe-4S] cluster serves as cofactor.

It catalyses the reaction chlorophyllide a + oxidized 2[4Fe-4S]-[ferredoxin] + 2 ADP + 2 phosphate = protochlorophyllide a + reduced 2[4Fe-4S]-[ferredoxin] + 2 ATP + 2 H2O. It functions in the pathway porphyrin-containing compound metabolism; chlorophyll biosynthesis (light-independent). In terms of biological role, component of the dark-operative protochlorophyllide reductase (DPOR) that uses Mg-ATP and reduced ferredoxin to reduce ring D of protochlorophyllide (Pchlide) to form chlorophyllide a (Chlide). This reaction is light-independent. The NB-protein (ChlN-ChlB) is the catalytic component of the complex. The protein is Light-independent protochlorophyllide reductase subunit B of Prochlorococcus marinus (strain MIT 9515).